A 238-amino-acid polypeptide reads, in one-letter code: tRNA (guanine-N(7)-)-methyltransferase (238 aa).

4 residues coordinate S-adenosyl-L-methionine: Glu-62, Glu-87, Asp-119, and Asp-141. Asp-141 is an active-site residue. Substrate-binding positions include Lys-145, Asp-177, and 216–219 (TRYE).

It belongs to the class I-like SAM-binding methyltransferase superfamily. TrmB family.

It carries out the reaction guanosine(46) in tRNA + S-adenosyl-L-methionine = N(7)-methylguanosine(46) in tRNA + S-adenosyl-L-homocysteine. It participates in tRNA modification; N(7)-methylguanine-tRNA biosynthesis. Functionally, catalyzes the formation of N(7)-methylguanine at position 46 (m7G46) in tRNA. The sequence is that of tRNA (guanine-N(7)-)-methyltransferase from Novosphingobium aromaticivorans (strain ATCC 700278 / DSM 12444 / CCUG 56034 / CIP 105152 / NBRC 16084 / F199).